Reading from the N-terminus, the 365-residue chain is G-protein coupled receptor 4 (365 aa).

At 1–10 the chain is on the extracellular side; that stretch reads MDNSTGTWEG. An N-linked (GlcNAc...) asparagine glycan is attached at Asn-3. Residues 11 to 47 form a helical membrane-spanning segment; sequence CHVDSRVDHLFPPSLYIFVIGVGLPTNCLALWAAYRQ. 2 disulfide bridges follow: Cys-11–Cys-260 and Cys-92–Cys-170. Over 48–51 the chain is Cytoplasmic; the sequence is VRQR. A helical membrane pass occupies residues 52–82; that stretch reads NELGVYLMNLSIADLLYICTLPLWVDYFLHH. Over 83–87 the chain is Extracellular; sequence DNWIH. The chain crosses the membrane as a helical span at residues 88–123; it reads GPGSCKLFGFIFYSNIYISIAFLCCISVDRYLAVAH. Residues 124-131 are Cytoplasmic-facing; the sequence is PLRFARLR. A helical membrane pass occupies residues 132 to 158; sequence RVKTAVAVSSVVWATELGANSAPLFHD. Topologically, residues 159 to 174 are extracellular; it reads ELFRDRYNHTFCFEKF. The tract at residues 159-174 is extracellular loop 2 (ECL2); the sequence is ELFRDRYNHTFCFEKF. An N-linked (GlcNAc...) asparagine glycan is attached at Asn-166. The chain crosses the membrane as a helical span at residues 175-212; the sequence is PMERWVAWMNLYRVFVGFLFPWALMLLCYRGILRAVQS. Residues 213–216 are Cytoplasmic-facing; it reads SVST. A helical transmembrane segment spans residues 217-252; that stretch reads ERQEKVKIKRLALSLIAIVLVCFAPYHALLLSRSAV. The Extracellular segment spans residues 253–262; sequence YLGRPWDCGF. Residues 263–291 traverse the membrane as a helical segment; that stretch reads EERVFSAYHSSLAFTSLNCVADPILYCLV. Residues 292-365 lie on the Cytoplasmic side of the membrane; sequence NEGARSDVAK…PLKVLLPPAQ (74 aa).

It belongs to the G-protein coupled receptor 1 family.

It is found in the cell membrane. Its activity is regulated as follows. Activated by a network of residues that connects an extracellular-facing cavity to Glu-147, a conserved charged residue buried in the transmembrane core of the receptor. Protonation likely drives conformational changes in extracellular loop 2 (ECL2), which stabilizes movement of transmembrane 3 (TM3) and a series of rearrangements that connect the extracellular-facing cavity to Glu-147, a residue only conserved in proton-sensing G-protein coupled receptors. Proton-sensing G-protein coupled receptor activated by extracellular pH, which is required to monitor pH changes and generate adaptive reactions. Activated by an optimal pH of 6.8-7.2. Ligand binding causes a conformation change that triggers signaling via guanine nucleotide-binding proteins (G proteins) and modulates the activity of downstream effectors, such as adenylate cyclase. GPR4 is mainly coupled to G(s) G proteins and mediates activation of adenylate cyclase activity. May also couple with G(q) and G(12)/G(13) G proteins. Acts as a key regulator of respiratory sensitivity to CO2/H(+) in brain retrotrapezoid nucleus neurons: acts by mediating detection of protons generated by the formation of carbonic acid in the blood, an important mechanism to impulse to breathe. Also acts as a regulator of acid secretion in the kidney collecting duct by maintaining acid-base homeostasis in the kidney. Acidosis-induced GPR4 activation increases paracellular gap formation and permeability of vascular endothelial cells, possibly through the G(12)/G(13)/Rho GTPase signaling pathway. This chain is G-protein coupled receptor 4, found in Rattus norvegicus (Rat).